The chain runs to 292 residues: 33 kDa chaperonin (292 aa).

2 disulfide bridges follow: Cys230–Cys232 and Cys263–Cys266.

It belongs to the HSP33 family. Under oxidizing conditions two disulfide bonds are formed involving the reactive cysteines. Under reducing conditions zinc is bound to the reactive cysteines and the protein is inactive.

It localises to the cytoplasm. Redox regulated molecular chaperone. Protects both thermally unfolding and oxidatively damaged proteins from irreversible aggregation. Plays an important role in the bacterial defense system toward oxidative stress. This chain is 33 kDa chaperonin, found in Salmonella typhi.